We begin with the raw amino-acid sequence, 196 residues long: Calcineurin B homologous protein 2 (196 aa).

A lipid anchor (N-myristoyl glycine) is attached at glycine 2. EF-hand domains follow at residues 26–61 (ASLLRLHHRFRALDRNKKGYLSRMDLQQIGALAVNP), 71–106 (FPDGSQRVDFPGFVRVLAHFRPVEDEDTETQDPKKP), 111–146 (SRRNKLHYAFQLYDLDRDGKISRHEMLQVLRLMVGV), and 152–187 (QLENIADRTVQEADEDGDGAVSFVEFTKSLEKMDVE). Serine 27 carries the phosphoserine modification. Residues aspartate 124, aspartate 126, aspartate 128, lysine 130, and glutamate 135 each coordinate Ca(2+). The Nuclear export signal signature appears at 137-148 (LQVLRLMVGVQV). Residues aspartate 165, aspartate 167, aspartate 169, and glutamate 176 each contribute to the Ca(2+) site.

It belongs to the calcineurin regulatory subunit family. CHP subfamily. In terms of assembly, interacts with PPP3CA. Interacts with SLC9A1/NHE1; the interaction occurs in a calcium-dependent manner. In terms of tissue distribution, expressed in malignantly transformed cells but not detected in normal tissues.

Its subcellular location is the nucleus. It is found in the cytoplasm. The protein resides in the cell membrane. Functions as an integral cofactor in cell pH regulation by controlling plasma membrane-type Na(+)/H(+) exchange activity. Binds to and activates SLC9A1/NHE1 in a serum-independent manner, thus increasing pH and protecting cells from serum deprivation-induced death. Also plays a role in the regulation of cell proliferation and tumor growth by increasing the phosphatase activity of PPP3CA in a calcium-dependent manner. Activator of the calcineurin/NFAT signaling pathway. Involved in the cytoplasmic translocation of the transcription factor NFATC3 to the nucleus. The protein is Calcineurin B homologous protein 2 (CHP2) of Homo sapiens (Human).